We begin with the raw amino-acid sequence, 340 residues long: Very-long-chain 3-oxoacyl-CoA reductase (340 aa).

A helical membrane pass occupies residues 23–43 (LQYTFAALGALYVLRGALSFV). Residues V68, R109, D123, D131, N150, K185, Y217, K221, V250, and T252 each contribute to the NADP(+) site. The active-site Proton donor is the Y217. Residue K221 is the Lowers pKa of active site Tyr of the active site.

The protein belongs to the short-chain dehydrogenases/reductases (SDR) family.

The protein localises to the endoplasmic reticulum membrane. It carries out the reaction a very-long-chain (3R)-3-hydroxyacyl-CoA + NADP(+) = a very-long-chain 3-oxoacyl-CoA + NADPH + H(+). The protein operates within lipid metabolism; fatty acid biosynthesis. Its function is as follows. Component of the microsomal membrane bound fatty acid elongation system, which produces the 26-carbon very long-chain fatty acids (VLCFA) from palmitate. Catalyzes the reduction of the 3-ketoacyl-CoA intermediate that is formed in each cycle of fatty acid elongation. VLCFAs serve as precursors for ceramide and sphingolipids. This chain is Very-long-chain 3-oxoacyl-CoA reductase, found in Podospora anserina (strain S / ATCC MYA-4624 / DSM 980 / FGSC 10383) (Pleurage anserina).